Here is a 1134-residue protein sequence, read N- to C-terminus: ATP-dependent helicase/deoxyribonuclease subunit B (1134 aa).

8–15 (GRAGSGKS) is an ATP binding site. Residues Cys771, Cys1089, Cys1092, and Cys1098 each contribute to the [4Fe-4S] cluster site.

This sequence belongs to the helicase family. AddB/RexB type 1 subfamily. Heterodimer of AddA and AddB. Mg(2+) serves as cofactor. The cofactor is [4Fe-4S] cluster.

The heterodimer acts as both an ATP-dependent DNA helicase and an ATP-dependent, dual-direction single-stranded exonuclease. Recognizes the chi site generating a DNA molecule suitable for the initiation of homologous recombination. The AddB subunit has 5' -&gt; 3' nuclease activity but not helicase activity. In Clostridium novyi (strain NT), this protein is ATP-dependent helicase/deoxyribonuclease subunit B.